Reading from the N-terminus, the 212-residue chain is Riboflavin synthase (212 aa).

2 Lumazine-binding repeats span residues 1 to 97 (MFTG…VGGH) and 98 to 195 (LVSG…VDSV). 2,4-dihydroxypteridine-binding positions include 4 to 6 (GIV), 48 to 50 (CLT), 62 to 67 (DIVEET), 101 to 103 (GHI), K137, 146 to 148 (SLT), and 160 to 165 (FLIPET).

As to quaternary structure, homotrimer.

It catalyses the reaction 2 6,7-dimethyl-8-(1-D-ribityl)lumazine + H(+) = 5-amino-6-(D-ribitylamino)uracil + riboflavin. Its pathway is cofactor biosynthesis; riboflavin biosynthesis; riboflavin from 2-hydroxy-3-oxobutyl phosphate and 5-amino-6-(D-ribitylamino)uracil: step 2/2. In terms of biological role, catalyzes the dismutation of two molecules of 6,7-dimethyl-8-ribityllumazine, resulting in the formation of riboflavin and 5-amino-6-(D-ribitylamino)uracil. In Buchnera aphidicola subsp. Baizongia pistaciae (strain Bp), this protein is Riboflavin synthase (ribE).